A 284-amino-acid polypeptide reads, in one-letter code: D-tagatose-1,6-bisphosphate aldolase subunit GatY (284 aa).

The active-site Proton donor is the Asp-82. Zn(2+)-binding residues include His-83 and His-180. Gly-181 is a dihydroxyacetone phosphate binding site. His-208 is a Zn(2+) binding site. Residues 209–211 (GAS) and 230–233 (NVAT) contribute to the dihydroxyacetone phosphate site.

It belongs to the class II fructose-bisphosphate aldolase family. TagBP aldolase GatY subfamily. Forms a complex with GatZ. Requires Zn(2+) as cofactor.

It catalyses the reaction D-tagatofuranose 1,6-bisphosphate = D-glyceraldehyde 3-phosphate + dihydroxyacetone phosphate. Its pathway is carbohydrate metabolism; D-tagatose 6-phosphate degradation; D-glyceraldehyde 3-phosphate and glycerone phosphate from D-tagatose 6-phosphate: step 2/2. Its function is as follows. Catalytic subunit of the tagatose-1,6-bisphosphate aldolase GatYZ, which catalyzes the reversible aldol condensation of dihydroxyacetone phosphate (DHAP or glycerone-phosphate) with glyceraldehyde 3-phosphate (G3P) to produce tagatose 1,6-bisphosphate (TBP). Requires GatZ subunit for full activity and stability. Is involved in the catabolism of galactitol. The chain is D-tagatose-1,6-bisphosphate aldolase subunit GatY from Salmonella newport (strain SL254).